A 543-amino-acid chain; its full sequence is Light-independent protochlorophyllide reductase subunit B (543 aa).

Residue D36 participates in [4Fe-4S] cluster binding. Catalysis depends on D287, which acts as the Proton donor. 422–423 (GL) is a substrate binding site.

The protein belongs to the ChlB/BchB/BchZ family. Protochlorophyllide reductase is composed of three subunits; BchL, BchN and BchB. Forms a heterotetramer of two BchB and two BchN subunits. Requires [4Fe-4S] cluster as cofactor.

The catalysed reaction is chlorophyllide a + oxidized 2[4Fe-4S]-[ferredoxin] + 2 ADP + 2 phosphate = protochlorophyllide a + reduced 2[4Fe-4S]-[ferredoxin] + 2 ATP + 2 H2O. The protein operates within porphyrin-containing compound metabolism; bacteriochlorophyll biosynthesis (light-independent). Its function is as follows. Component of the dark-operative protochlorophyllide reductase (DPOR) that uses Mg-ATP and reduced ferredoxin to reduce ring D of protochlorophyllide (Pchlide) to form chlorophyllide a (Chlide). This reaction is light-independent. The NB-protein (BchN-BchB) is the catalytic component of the complex. The chain is Light-independent protochlorophyllide reductase subunit B from Rubrivivax gelatinosus (strain NBRC 100245 / IL144).